The following is a 219-amino-acid chain: Cytochrome c biogenesis ATP-binding export protein CcmA (219 aa).

The 209-residue stretch at 10-218 (ISAVNLTCIR…TLDYSYDSAV (209 aa)) folds into the ABC transporter domain. 42-49 (GPNGSGKT) serves as a coordination point for ATP.

Belongs to the ABC transporter superfamily. CcmA exporter (TC 3.A.1.107) family. As to quaternary structure, the complex is composed of two ATP-binding proteins (CcmA) and two transmembrane proteins (CcmB).

The protein resides in the cell inner membrane. It carries out the reaction heme b(in) + ATP + H2O = heme b(out) + ADP + phosphate + H(+). In terms of biological role, part of the ABC transporter complex CcmAB involved in the biogenesis of c-type cytochromes; once thought to export heme, this seems not to be the case, but its exact role is uncertain. Responsible for energy coupling to the transport system. This chain is Cytochrome c biogenesis ATP-binding export protein CcmA, found in Colwellia psychrerythraea (strain 34H / ATCC BAA-681) (Vibrio psychroerythus).